The sequence spans 608 residues: Dextranase (608 aa).

An N-terminal signal peptide occupies residues 1–19 (MATMLKLLALTLAISESAI). Positions 20–34 (GAVMHPPGNSHPGTH) are excised as a propeptide. 3 N-linked (GlcNAc...) asparagine glycosylation sites follow: Asn39, Asn571, and Asn574.

The protein belongs to the glycosyl hydrolase 49 family. N-glycosylated.

It is found in the secreted. It carries out the reaction Endohydrolysis of (1-&gt;6)-alpha-D-glucosidic linkages in dextran.. In Talaromyces minioluteus (Filamentous fungus), this protein is Dextranase (DEX).